The primary structure comprises 259 residues: Deoxyribose-phosphate aldolase (259 aa).

Asp102 serves as the catalytic Proton donor/acceptor. Residue Lys166 is the Schiff-base intermediate with acetaldehyde of the active site. Residue Lys200 is the Proton donor/acceptor of the active site.

This sequence belongs to the DeoC/FbaB aldolase family. DeoC type 2 subfamily.

It localises to the cytoplasm. It catalyses the reaction 2-deoxy-D-ribose 5-phosphate = D-glyceraldehyde 3-phosphate + acetaldehyde. It functions in the pathway carbohydrate degradation; 2-deoxy-D-ribose 1-phosphate degradation; D-glyceraldehyde 3-phosphate and acetaldehyde from 2-deoxy-alpha-D-ribose 1-phosphate: step 2/2. Catalyzes a reversible aldol reaction between acetaldehyde and D-glyceraldehyde 3-phosphate to generate 2-deoxy-D-ribose 5-phosphate. The polypeptide is Deoxyribose-phosphate aldolase (Vibrio cholerae serotype O1 (strain ATCC 39315 / El Tor Inaba N16961)).